Here is a 224-residue protein sequence, read N- to C-terminus: Pyridoxine/pyridoxamine 5'-phosphate oxidase (224 aa).

Substrate contacts are provided by residues 14–17 and Lys-76; that span reads REHY. Residues 71-76, 86-87, Arg-92, Lys-93, and Gln-115 each bind FMN; these read RTVLMK and YT. 3 residues coordinate substrate: Tyr-133, Arg-137, and Ser-141. Residues 150 to 151 and Trp-196 contribute to the FMN site; that span reads QS. 202–204 is a binding site for substrate; the sequence is RLH. Residue Arg-206 coordinates FMN.

It belongs to the pyridoxamine 5'-phosphate oxidase family. As to quaternary structure, homodimer. It depends on FMN as a cofactor.

The catalysed reaction is pyridoxamine 5'-phosphate + O2 + H2O = pyridoxal 5'-phosphate + H2O2 + NH4(+). It carries out the reaction pyridoxine 5'-phosphate + O2 = pyridoxal 5'-phosphate + H2O2. It functions in the pathway cofactor metabolism; pyridoxal 5'-phosphate salvage; pyridoxal 5'-phosphate from pyridoxamine 5'-phosphate: step 1/1. Its pathway is cofactor metabolism; pyridoxal 5'-phosphate salvage; pyridoxal 5'-phosphate from pyridoxine 5'-phosphate: step 1/1. Catalyzes the oxidation of either pyridoxine 5'-phosphate (PNP) or pyridoxamine 5'-phosphate (PMP) into pyridoxal 5'-phosphate (PLP). This Streptomyces avermitilis (strain ATCC 31267 / DSM 46492 / JCM 5070 / NBRC 14893 / NCIMB 12804 / NRRL 8165 / MA-4680) protein is Pyridoxine/pyridoxamine 5'-phosphate oxidase.